The primary structure comprises 185 residues: Large ribosomal subunit protein uL5 (185 aa).

The protein belongs to the universal ribosomal protein uL5 family. As to quaternary structure, part of the 50S ribosomal subunit; part of the 5S rRNA/L5/L18/L25 subcomplex. Contacts the 5S rRNA and the P site tRNA. Forms a bridge to the 30S subunit in the 70S ribosome.

This is one of the proteins that bind and probably mediate the attachment of the 5S RNA into the large ribosomal subunit, where it forms part of the central protuberance. In the 70S ribosome it contacts protein S13 of the 30S subunit (bridge B1b), connecting the 2 subunits; this bridge is implicated in subunit movement. Contacts the P site tRNA; the 5S rRNA and some of its associated proteins might help stabilize positioning of ribosome-bound tRNAs. This chain is Large ribosomal subunit protein uL5, found in Bartonella henselae (strain ATCC 49882 / DSM 28221 / CCUG 30454 / Houston 1) (Rochalimaea henselae).